Here is a 155-residue protein sequence, read N- to C-terminus: Transcriptional repressor NrdR (155 aa).

The segment covering 1 to 10 (MQCPHCHHNS) has biased composition (basic residues). The tract at residues 1–21 (MQCPHCHHNSSRVVDSRPTDG) is disordered. Residues 3–34 (CPHCHHNSSRVVDSRPTDGGRAIRRRRECENC) fold into a zinc finger. The ATP-cone domain maps to 49–139 (LLVIKKNGTR…VYRQFKDMSV (91 aa)).

Belongs to the NrdR family. The cofactor is Zn(2+).

Functionally, negatively regulates transcription of bacterial ribonucleotide reductase nrd genes and operons by binding to NrdR-boxes. The polypeptide is Transcriptional repressor NrdR (Lacticaseibacillus casei (strain BL23) (Lactobacillus casei)).